Here is a 198-residue protein sequence, read N- to C-terminus: Suppressor of cytokine signaling 2 (198 aa).

The tract at residues 1–29 (MTLRCLEPSGNGADRTRSQWGTAGLPEEQ) is disordered. The interval 1-75 (MTLRCLEPSG…PEGTFLIRDS (75 aa)) is interaction with AREL1. S30 carries the post-translational modification Phosphoserine. One can recognise an SH2 domain in the interval 48–156 (WYWGSMTVNE…TVHLYLTKPL (109 aa)). S52 bears the Phosphoserine; by PKC mark. Residues 151–197 (YLTKPLYTSAPTLQHFCRLAINKCTGTIWGLPLPTRLKDYLEEYKFQ) enclose the SOCS box domain. K173 is covalently cross-linked (Glycyl lysine isopeptide (Lys-Gly) (interchain with G-Cter in ubiquitin)).

In terms of assembly, substrate-recognition component of the ECS(SOCS2) complex, composed of SOCS2, CUL5, ELOB, ELOC and RNF7/RBX2. Interacts with IGF1R. Interacts with DCUN1D1. In terms of processing, ubiquitinated; mediated by AREL1 and leading to its subsequent proteasomal degradation. Ubiquitination is dependent on phosphorylation at Ser-52, by PKC and is stimulated by LPS. Phosphorylation at Ser-52 by PKC facilitates its ubiquitination and proteasomal degradation. As to expression, expressed primarily in the testis, some expression in liver and lung.

The protein localises to the cytoplasm. Its pathway is protein modification; protein ubiquitination. Functionally, substrate-recognition component of a cullin-5-RING E3 ubiquitin-protein ligase complex (ECS complex, also named CRL5 complex), which mediates the ubiquitination and subsequent proteasomal degradation of target proteins, such as EPOR and GHR. Specifically recognizes and binds phosphorylated proteins via its SH2 domain, promoting their ubiquitination. The ECS(SOCS2) complex acts as a key regulator of growth hormone receptor (GHR) levels by mediating ubiquitination and degradation of GHR, following GHR phosphorylation by JAK2. The ECS(SOCS2) also catalyzes ubiquitination and degradation of JAK2-phosphorylated EPOR. The protein is Suppressor of cytokine signaling 2 of Mus musculus (Mouse).